Consider the following 60-residue polypeptide: uncharacterized protein (60 aa).

The chain crosses the membrane as a helical span at residues 19–39 (LSIMCGCSIYFLLLVFILTFY).

Its subcellular location is the membrane. This is an uncharacterized protein from Saccharomyces cerevisiae (strain ATCC 204508 / S288c) (Baker's yeast).